Here is a 515-residue protein sequence, read N- to C-terminus: Zinc metalloproteinase-disintegrin-like EoMP06 (515 aa).

Positions 1-94 (VEDHCYYHGR…TLGLIVPPHG (94 aa)) are excised as a propeptide. A Pyrrolidone carboxylic acid modification is found at glutamine 95. Positions 100–296 (KFIELIIVVD…YNPKCIVDPP (197 aa)) constitute a Peptidase M12B domain. Position 103 (glutamate 103) interacts with Ca(2+). A glycan (N-linked (GlcNAc...) asparagine) is linked at asparagine 160. Aspartate 187 is a binding site for Ca(2+). Asparagine 194 and asparagine 225 each carry an N-linked (GlcNAc...) asparagine glycan. 3 disulfide bridges follow: cysteine 211-cysteine 291, cysteine 251-cysteine 275, and cysteine 253-cysteine 258. Residue histidine 236 participates in Zn(2+) binding. Glutamate 237 is an active-site residue. Positions 240 and 246 each coordinate Zn(2+). Positions 291, 306, 309, 311, 313, 316, and 319 each coordinate Ca(2+). Residues 304–390 (PAVCGNGVWE…ECPRNEFQRN (87 aa)) enclose the Disintegrin domain. 14 cysteine pairs are disulfide-bonded: cysteine 307–cysteine 336, cysteine 318–cysteine 331, cysteine 320–cysteine 326, cysteine 330–cysteine 353, cysteine 344–cysteine 350, cysteine 349–cysteine 375, cysteine 362–cysteine 382, cysteine 369–cysteine 401, cysteine 394–cysteine 406, cysteine 413–cysteine 466, cysteine 428–cysteine 477, cysteine 441–cysteine 454, cysteine 461–cysteine 503, and cysteine 497–cysteine 508. The D/ECD-tripeptide signature appears at 368-370 (DCD). 3 residues coordinate Ca(2+): aspartate 370, valine 371, and asparagine 385.

Belongs to the venom metalloproteinase (M12B) family. P-III subfamily. P-IIIa sub-subfamily. In terms of assembly, monomer. Zn(2+) is required as a cofactor. As to expression, expressed by the venom gland.

It is found in the secreted. In terms of biological role, snake venom zinc metalloproteinase that catalyzes the conversion of prothrombin (F2) to alpha-thrombin through formation of a thrombin intermediate, thereby functioning as a procoagulant protein. The chain is Zinc metalloproteinase-disintegrin-like EoMP06 from Echis ocellatus (Ocellated saw-scaled viper).